Here is a 440-residue protein sequence, read N- to C-terminus: 3-phosphoshikimate 1-carboxyvinyltransferase (440 aa).

K28, S29, and R33 together coordinate 3-phosphoshikimate. K28 contributes to the phosphoenolpyruvate binding site. Positions 98 and 126 each coordinate phosphoenolpyruvate. The 3-phosphoshikimate site is built by S171, Q173, D318, and K345. A phosphoenolpyruvate-binding site is contributed by Q173. The Proton acceptor role is filled by D318. Residues R349 and R391 each coordinate phosphoenolpyruvate.

Belongs to the EPSP synthase family. In terms of assembly, monomer.

It localises to the cytoplasm. The enzyme catalyses 3-phosphoshikimate + phosphoenolpyruvate = 5-O-(1-carboxyvinyl)-3-phosphoshikimate + phosphate. The protein operates within metabolic intermediate biosynthesis; chorismate biosynthesis; chorismate from D-erythrose 4-phosphate and phosphoenolpyruvate: step 6/7. In terms of biological role, catalyzes the transfer of the enolpyruvyl moiety of phosphoenolpyruvate (PEP) to the 5-hydroxyl of shikimate-3-phosphate (S3P) to produce enolpyruvyl shikimate-3-phosphate and inorganic phosphate. The protein is 3-phosphoshikimate 1-carboxyvinyltransferase of Anaeromyxobacter dehalogenans (strain 2CP-C).